The primary structure comprises 314 residues: UPF0761 membrane protein VP0125 (314 aa).

The next 6 membrane-spanning stretches (helical) occupy residues Tyr41 to Leu61, Met104 to Asp124, Leu139 to Ala159, Phe185 to Val205, Val217 to Ile237, and Ala249 to Leu269. The interval Glu295–Gln314 is disordered.

This sequence belongs to the UPF0761 family.

It is found in the cell inner membrane. In Vibrio parahaemolyticus serotype O3:K6 (strain RIMD 2210633), this protein is UPF0761 membrane protein VP0125.